Consider the following 89-residue polypeptide: Small ribosomal subunit protein uS15 (89 aa).

Belongs to the universal ribosomal protein uS15 family. As to quaternary structure, part of the 30S ribosomal subunit. Forms a bridge to the 50S subunit in the 70S ribosome, contacting the 23S rRNA.

One of the primary rRNA binding proteins, it binds directly to 16S rRNA where it helps nucleate assembly of the platform of the 30S subunit by binding and bridging several RNA helices of the 16S rRNA. Its function is as follows. Forms an intersubunit bridge (bridge B4) with the 23S rRNA of the 50S subunit in the ribosome. This is Small ribosomal subunit protein uS15 from Lactobacillus johnsonii (strain CNCM I-12250 / La1 / NCC 533).